The sequence spans 282 residues: Transformer-2 protein homolog alpha (282 aa).

A disordered region spans residues 1–118 (MSDVEENNFE…TGSRANPDPN (118 aa)). An N-acetylserine modification is found at serine 2. Phosphoserine is present on residues serine 2 and serine 14. Residue threonine 24 is modified to Phosphothreonine. The segment covering 51 to 84 (RSRSKSRSRSRRHSHRRYTRSRSHSHSHRRRSRS) has biased composition (basic residues). Residues serine 82, serine 84, and serine 86 each carry the phosphoserine modification. Threonine 88 bears the Phosphothreonine mark. Residues 92 to 110 (RRRRSRSHSPMSNRRRHTG) are compositionally biased toward basic residues. Phosphoserine is present on residues serine 96 and serine 98. The region spanning 119–197 (TCLGVFGLSL…RRIRVDYSIT (79 aa)) is the RRM domain. A Glycyl lysine isopeptide (Lys-Gly) (interchain with G-Cter in SUMO2) cross-link involves residue lysine 198. Residues 198–225 (KRAHTPTPGIYMGRPTHSGGGGGGGGGG) are linker. Disordered stretches follow at residues 201-245 (HTPT…YDRG) and 260-282 (SPSPYYSRYRSRSRSRSYSPRRY). Phosphothreonine occurs at positions 202 and 204. Gly residues predominate over residues 215-230 (SGGGGGGGGGGGGGGG). An Omega-N-methylarginine modification is found at arginine 232. A compositionally biased stretch (basic and acidic residues) spans 232-245 (RRRDSYYDRGYDRG). At serine 236 the chain carries Phosphoserine. Over residues 268–282 (YRSRSRSRSYSPRRY) the composition is skewed to basic residues.

The protein belongs to the splicing factor SR family. In terms of assembly, binds to A3 enhancer proteins SRp75, SRp55, SRp40 and SRp30. Interacts with ILDR1 (via C-terminus) and ILDR2. Post-translationally, phosphorylated in the RS domains.

Its subcellular location is the nucleus. Functionally, sequence-specific RNA-binding protein which participates in the control of pre-mRNA splicing. The protein is Transformer-2 protein homolog alpha of Homo sapiens (Human).